A 235-amino-acid polypeptide reads, in one-letter code: Elongation factor Tu, chloroplastic (235 aa).

The region spanning 1-125 (KNMITGAAQM…SVDSYIPTPI (125 aa)) is the tr-type G domain. 47–50 (NKED) serves as a coordination point for GTP.

The protein belongs to the TRAFAC class translation factor GTPase superfamily. Classic translation factor GTPase family. EF-Tu/EF-1A subfamily.

It is found in the plastid. It localises to the chloroplast. It carries out the reaction GTP + H2O = GDP + phosphate + H(+). GTP hydrolase that promotes the GTP-dependent binding of aminoacyl-tRNA to the A-site of ribosomes during protein biosynthesis. This Costaria costata (Five-ribbed kelp) protein is Elongation factor Tu, chloroplastic (tufA).